We begin with the raw amino-acid sequence, 210 residues long: GRF1-interacting factor 1 (210 aa).

Low complexity predominate over residues Ala135 to Ser152. The disordered stretch occupies residues Ala135–Asn210. The segment covering Gly182 to Gly198 has biased composition (gly residues).

It belongs to the SS18 family. As to quaternary structure, interacts with GRF1, GRF2, GRF5 and GRF9. As to expression, strongly expressed in actively growing and developing tissues, such as roots, upper stems, and shoot tips and flower buds. Also expressed in mature flowers. Not expressed in the shoot apical meristem (SAM). Highly accumulated in the proximal part of leaf primordia, in the key proliferative zone at the junction region between the leaf blade and leaf petiole.

In terms of biological role, transcription coactivator that plays a role in the regulation of cell expansion in leaf and cotyledons tissues. Component of a network formed by miR396, the GRFs and their interacting factors (GIFs) acting in the regulation of meristem function, at least partially through the control of cell proliferation. Appears to function synergistically with GRF1 as a transcriptional coactivator. Acts together with GRF5 for the development of appropriate leaf size and shape through the promotion and/or maintenance of cell proliferation activity in leaf primordia. Plays a role in adaxial/abaxial patterning and growth in leaf morphogenesis. GIFs are involved in the positive regulation of cell proliferation of lateral organs in a functionally redundant manner. Together with GATA18/HAN, mediates cotyledon identity by preventing ectopic root formation through the repression of PLT1 expression. The polypeptide is GRF1-interacting factor 1 (Arabidopsis thaliana (Mouse-ear cress)).